Consider the following 251-residue polypeptide: Triosephosphate isomerase (251 aa).

Substrate is bound at residue 9 to 11 (NWK). Catalysis depends on His-95, which acts as the Electrophile. Residue Glu-167 is the Proton acceptor of the active site. Substrate-binding positions include Gly-173, Ser-213, and 234 to 235 (GG). The residue at position 213 (Ser-213) is a Phosphoserine.

The protein belongs to the triosephosphate isomerase family. Homodimer.

The protein localises to the cytoplasm. The enzyme catalyses D-glyceraldehyde 3-phosphate = dihydroxyacetone phosphate. It functions in the pathway carbohydrate biosynthesis; gluconeogenesis. Its pathway is carbohydrate degradation; glycolysis; D-glyceraldehyde 3-phosphate from glycerone phosphate: step 1/1. Its function is as follows. Involved in the gluconeogenesis. Catalyzes stereospecifically the conversion of dihydroxyacetone phosphate (DHAP) to D-glyceraldehyde-3-phosphate (G3P). This chain is Triosephosphate isomerase, found in Bacillus mycoides (strain KBAB4) (Bacillus weihenstephanensis).